Reading from the N-terminus, the 341-residue chain is UDP-3-O-acylglucosamine N-acyltransferase (341 aa).

Residue His240 is the Proton acceptor of the active site.

The protein belongs to the transferase hexapeptide repeat family. LpxD subfamily. Homotrimer.

The catalysed reaction is a UDP-3-O-[(3R)-3-hydroxyacyl]-alpha-D-glucosamine + a (3R)-hydroxyacyl-[ACP] = a UDP-2-N,3-O-bis[(3R)-3-hydroxyacyl]-alpha-D-glucosamine + holo-[ACP] + H(+). Its pathway is bacterial outer membrane biogenesis; LPS lipid A biosynthesis. Catalyzes the N-acylation of UDP-3-O-acylglucosamine using 3-hydroxyacyl-ACP as the acyl donor. Is involved in the biosynthesis of lipid A, a phosphorylated glycolipid that anchors the lipopolysaccharide to the outer membrane of the cell. In Cellvibrio japonicus (strain Ueda107) (Pseudomonas fluorescens subsp. cellulosa), this protein is UDP-3-O-acylglucosamine N-acyltransferase.